Here is a 159-residue protein sequence, read N- to C-terminus: Small ribosomal subunit protein uS9 (159 aa).

The protein belongs to the universal ribosomal protein uS9 family.

This chain is Small ribosomal subunit protein uS9, found in Rickettsia conorii (strain ATCC VR-613 / Malish 7).